We begin with the raw amino-acid sequence, 500 residues long: Aspartyl/glutamyl-tRNA(Asn/Gln) amidotransferase subunit B (500 aa).

This sequence belongs to the GatB/GatE family. GatB subfamily. In terms of assembly, heterotrimer of A, B and C subunits.

The catalysed reaction is L-glutamyl-tRNA(Gln) + L-glutamine + ATP + H2O = L-glutaminyl-tRNA(Gln) + L-glutamate + ADP + phosphate + H(+). It catalyses the reaction L-aspartyl-tRNA(Asn) + L-glutamine + ATP + H2O = L-asparaginyl-tRNA(Asn) + L-glutamate + ADP + phosphate + 2 H(+). In terms of biological role, allows the formation of correctly charged Asn-tRNA(Asn) or Gln-tRNA(Gln) through the transamidation of misacylated Asp-tRNA(Asn) or Glu-tRNA(Gln) in organisms which lack either or both of asparaginyl-tRNA or glutaminyl-tRNA synthetases. The reaction takes place in the presence of glutamine and ATP through an activated phospho-Asp-tRNA(Asn) or phospho-Glu-tRNA(Gln). In Rhizobium johnstonii (strain DSM 114642 / LMG 32736 / 3841) (Rhizobium leguminosarum bv. viciae), this protein is Aspartyl/glutamyl-tRNA(Asn/Gln) amidotransferase subunit B.